The primary structure comprises 278 residues: Shikimate dehydrogenase (NADP(+)) (278 aa).

Residues 19–21 (SLS) and T66 each bind shikimate. K70 functions as the Proton acceptor in the catalytic mechanism. Shikimate contacts are provided by N91 and D106. NADP(+) is bound by residues 130-134 (GAGGS), 152-157 (NRTVEK), and L222. Shikimate is bound at residue Y224. G245 contributes to the NADP(+) binding site.

It belongs to the shikimate dehydrogenase family. In terms of assembly, homodimer.

It carries out the reaction shikimate + NADP(+) = 3-dehydroshikimate + NADPH + H(+). Its pathway is metabolic intermediate biosynthesis; chorismate biosynthesis; chorismate from D-erythrose 4-phosphate and phosphoenolpyruvate: step 4/7. Involved in the biosynthesis of the chorismate, which leads to the biosynthesis of aromatic amino acids. Catalyzes the reversible NADPH linked reduction of 3-dehydroshikimate (DHSA) to yield shikimate (SA). The chain is Shikimate dehydrogenase (NADP(+)) from Methanococcus aeolicus (strain ATCC BAA-1280 / DSM 17508 / OCM 812 / Nankai-3).